Reading from the N-terminus, the 350-residue chain is Histidinol-phosphate aminotransferase 1 (350 aa).

An N6-(pyridoxal phosphate)lysine modification is found at K209.

The protein belongs to the class-II pyridoxal-phosphate-dependent aminotransferase family. Histidinol-phosphate aminotransferase subfamily. Homodimer. The cofactor is pyridoxal 5'-phosphate.

The catalysed reaction is L-histidinol phosphate + 2-oxoglutarate = 3-(imidazol-4-yl)-2-oxopropyl phosphate + L-glutamate. Its pathway is amino-acid biosynthesis; L-histidine biosynthesis; L-histidine from 5-phospho-alpha-D-ribose 1-diphosphate: step 7/9. The chain is Histidinol-phosphate aminotransferase 1 (hisC1) from Bradyrhizobium diazoefficiens (strain JCM 10833 / BCRC 13528 / IAM 13628 / NBRC 14792 / USDA 110).